The chain runs to 238 residues: Large ribosomal subunit protein uL2 (238 aa).

The segment covering 1–11 has biased composition (polar residues); the sequence is MGKRLISQNRG. Disordered stretches follow at residues 1-22 and 202-223; these read MGKRLISQNRGRGTPTYRAPSH and FGGGAWKHPGKPTTVSRNAPPG.

It belongs to the universal ribosomal protein uL2 family. Part of the 50S ribosomal subunit. Forms a bridge to the 30S subunit in the 70S ribosome.

One of the primary rRNA binding proteins. Required for association of the 30S and 50S subunits to form the 70S ribosome, for tRNA binding and peptide bond formation. It has been suggested to have peptidyltransferase activity; this is somewhat controversial. Makes several contacts with the 16S rRNA in the 70S ribosome. The polypeptide is Large ribosomal subunit protein uL2 (Methanosarcina mazei (strain ATCC BAA-159 / DSM 3647 / Goe1 / Go1 / JCM 11833 / OCM 88) (Methanosarcina frisia)).